The primary structure comprises 147 residues: uncharacterized protein (147 aa).

Residues 1 to 16 (MDHRAAFGYFSNACFK) lie on the Extracellular side of the membrane. A helical transmembrane segment spans residues 17–37 (VMLFSSLLASFASSVAFISLI). Residues 38-105 (TFSLSSSESP…FEAAFFLLTN (68 aa)) lie on the Cytoplasmic side of the membrane. The chain crosses the membrane as a helical span at residues 106 to 126 (EMIFFILYYFFSCLMFFYVAS). At 127–147 (ERNTNPKILQTINTKPLYIKN) the chain is on the extracellular side.

It is found in the membrane. This is an uncharacterized protein from Saccharomyces cerevisiae (strain ATCC 204508 / S288c) (Baker's yeast).